The chain runs to 688 residues: MAQENLLIELGTEELPPKSLRQLAESFASNVEAELNKAELSFDSVRWLASPRRLALVIANLSDSQADKIVEKRGPAVNVAFDAEGQATKAAQGWARSNGITVEQAERLITDKGEWLLFKSEVKGLSVAELIPEIAANALAKLPISKPMRWGSSSTQFIRPVHTVTMLFGSRLIQGELLGVASDRIIRGHRFLGEAELIIDHADQYETLLDDSGKVIVDYERRKAIIRDQVEALAAHENGVADIDESLLEEVTSLVEWPVTLVGSFEDKFLDVPSEALIYTMKDNQKYFPVLDKDGKLLPRFIFVSNIVSRDPAQVISGNEKVIRPRLADAEFFFETDKKKTLASRLESLSSVLFQQKLGTLKEKSERIANVAEDIALQIKADTKHAQRAGLLSKTDLMTDMVMEFPDVQGIMGMHYALHDGEEQEVAIALNEQYLPRFAGDKLPTSLVACAVSLADKLDTLVGIFGIGQAPKGAADPFALRRAAIGLLRIITNKNLDLDLVELVEIAKLQYGHKLTNDNVVQDVVDFLFARFRATYQANGYSVELIQSVLVRRPTKPVDFEKRLQAVAKFQTLPEAAPIAAANKRISNILAKVKGEINAQVDPSLLQEPAEIKLSEILGSLESTLRPLFDNLDYESALFELASLNEPVDEFFDNVMVMAEDPAIKANRLAILNRLRNLFLQIADVSVL.

This sequence belongs to the class-II aminoacyl-tRNA synthetase family. In terms of assembly, tetramer of two alpha and two beta subunits.

Its subcellular location is the cytoplasm. The enzyme catalyses tRNA(Gly) + glycine + ATP = glycyl-tRNA(Gly) + AMP + diphosphate. The protein is Glycine--tRNA ligase beta subunit of Psychromonas ingrahamii (strain DSM 17664 / CCUG 51855 / 37).